Here is a 183-residue protein sequence, read N- to C-terminus: Translation initiation factor IF-3 (183 aa).

The span at 1 to 13 (MKQPDRNQQQGAK) shows a compositional bias: polar residues. The segment at 1–24 (MKQPDRNQQQGAKSNRPAINDEIR) is disordered.

Belongs to the IF-3 family. As to quaternary structure, monomer.

Its subcellular location is the cytoplasm. In terms of biological role, IF-3 binds to the 30S ribosomal subunit and shifts the equilibrium between 70S ribosomes and their 50S and 30S subunits in favor of the free subunits, thus enhancing the availability of 30S subunits on which protein synthesis initiation begins. The sequence is that of Translation initiation factor IF-3 from Acinetobacter baylyi (strain ATCC 33305 / BD413 / ADP1).